The sequence spans 273 residues: 4-hydroxy-tetrahydrodipicolinate reductase (273 aa).

NAD(+) contacts are provided by residues 12–17 (GAGGRM) and Glu-38. Arg-39 provides a ligand contact to NADP(+). NAD(+) contacts are provided by residues 102–104 (GTT) and 126–129 (AANF). His-159 serves as the catalytic Proton donor/acceptor. His-160 is a (S)-2,3,4,5-tetrahydrodipicolinate binding site. Lys-163 acts as the Proton donor in catalysis. 169–170 (GT) lines the (S)-2,3,4,5-tetrahydrodipicolinate pocket.

The protein belongs to the DapB family. Homotetramer.

It is found in the cytoplasm. It carries out the reaction (S)-2,3,4,5-tetrahydrodipicolinate + NAD(+) + H2O = (2S,4S)-4-hydroxy-2,3,4,5-tetrahydrodipicolinate + NADH + H(+). It catalyses the reaction (S)-2,3,4,5-tetrahydrodipicolinate + NADP(+) + H2O = (2S,4S)-4-hydroxy-2,3,4,5-tetrahydrodipicolinate + NADPH + H(+). It functions in the pathway amino-acid biosynthesis; L-lysine biosynthesis via DAP pathway; (S)-tetrahydrodipicolinate from L-aspartate: step 4/4. Catalyzes the conversion of 4-hydroxy-tetrahydrodipicolinate (HTPA) to tetrahydrodipicolinate. The polypeptide is 4-hydroxy-tetrahydrodipicolinate reductase (Salmonella enteritidis PT4 (strain P125109)).